We begin with the raw amino-acid sequence, 612 residues long: uncharacterized protein (612 aa).

Disordered stretches follow at residues 46-113 (QQPQ…MVTP), 129-185 (QQYQ…TPTY), 313-360 (TKDG…GSTM), 457-488 (FSIS…SGYG), and 593-612 (NNTN…VVTI). Over residues 58-102 (HQQIPISTQSTPNSTSSTTTTTTTTTSTTTAPTSNSKKSKTTPSN) the composition is skewed to low complexity. 2 stretches are compositionally biased toward polar residues: residues 103 to 113 (GNKPTSGMVTP) and 129 to 138 (QQYQPNSQLQ). The span at 143–169 (IIKKSSLSTTPNNINNNNNNNNNTNTI) shows a compositional bias: low complexity. Positions 175 to 185 (GGNNSAPTPTY) are enriched in polar residues. Positions 323 to 359 (TTSSTSTSSSATSTTSSSTSSTTTTSSTSNSSTPGST) are enriched in low complexity.

This is an uncharacterized protein from Dictyostelium discoideum (Social amoeba).